A 260-amino-acid polypeptide reads, in one-letter code: uncharacterized protein (260 aa).

The first 22 residues, 1–22 (MGYLKRFALYISILVLIVMVAG), serve as a signal peptide directing secretion. Residue Cys23 is the site of N-palmitoyl cysteine attachment. Residue Cys23 is the site of S-diacylglycerol cysteine attachment.

This sequence belongs to the staphylococcal tandem lipoprotein family.

The protein resides in the cell membrane. This is an uncharacterized protein from Staphylococcus aureus (strain bovine RF122 / ET3-1).